A 707-amino-acid chain; its full sequence is DNA-binding protein RFX2 (707 aa).

Residue Ser-33 is modified to Phosphoserine. Positions 204 to 279 (HLQWLLDNYE…YHYYGIRLKP (76 aa)) form a DNA-binding region, RFX-type winged-helix. Positions 297–337 (QQPVHQKPRYRPAQKTDSLGESGSHSSLHSTPEQAMAAQSQ) are disordered. Over residues 315 to 337 (LGESGSHSSLHSTPEQAMAAQSQ) the composition is skewed to low complexity. Position 420 is a phosphoserine (Ser-420).

It belongs to the RFX family. In terms of assembly, homodimer; probably only forms homodimers in testis. Heterodimer; heterodimerizes with RFX1 and RFX3.

Its subcellular location is the nucleus. It localises to the cytoplasm. Transcription factor that acts as a key regulator of spermatogenesis. Acts by regulating expression of genes required for the haploid phase during spermiogenesis, such as genes required for cilium assembly and function. Recognizes and binds the X-box, a regulatory motif with DNA sequence 5'-GTNRCC(0-3N)RGYAAC-3' present on promoters. Probably activates transcription of the testis-specific histone gene H1-6. This chain is DNA-binding protein RFX2 (RFX2), found in Bos taurus (Bovine).